The following is a 1359-amino-acid chain: Regulatory-associated protein of TOR 2 (1359 aa).

Disordered stretches follow at residues 17-64 (SSAA…PQVA) and 782-819 (SDNS…QHSD). The segment covering 32-50 (HLVDDHLPVENGPDPRRDV) has biased composition (basic and acidic residues). Positions 782–805 (SDNSATARDGRISTSSPIATNSIM) are enriched in polar residues. The span at 806–819 (HGSPQSDDSSQHSD) shows a compositional bias: low complexity. 7 WD repeats span residues 1041 to 1080 (RFEL…PVNT), 1087 to 1127 (SDRG…GGQK), 1139 to 1178 (RSAG…VNTI), 1181 to 1221 (TADS…RLVY), 1228 to 1269 (PRSE…EPYL), 1273 to 1312 (AHRG…LTII), and 1321 to 1359 (QRIG…YQVR).

The protein belongs to the WD repeat RAPTOR family. The target of rapamycin complex 1 (TORC1) is composed of at least RAPTOR, LST8 and TOR.

Its function is as follows. Component of TORC1 complex, which is an essential cell growth regulator that controls plant development. Acts by recruiting substrates for TOR. Acts by activating transcription, protein synthesis and ribosome biogenesis, and inhibiting mRNA degradation and autophagy. The sequence is that of Regulatory-associated protein of TOR 2 (RAPTOR2) from Oryza sativa subsp. japonica (Rice).